Reading from the N-terminus, the 498-residue chain is Elastase (498 aa).

Positions 1-23 (MKKVSTLDLLFVAIMGVSPAAFA) are cleaved as a signal peptide. The propeptide occupies 24–197 (ADLIDVSKLP…VLDQWEGLAH (174 aa)). Residues C227 and C255 are joined by a disulfide bond. T236 carries the post-translational modification Phosphothreonine. D333 is a binding site for Ca(2+). H337 contacts Zn(2+). Residue E338 is part of the active site. Residues H341 and E361 each contribute to the Zn(2+) site. 4 residues coordinate Ca(2+): E369, E372, D380, and L382. H420 functions as the Proton donor in the catalytic mechanism. C467 and C494 are disulfide-bonded.

Belongs to the peptidase M4 family. It depends on Ca(2+) as a cofactor. Zn(2+) is required as a cofactor. Made as a pre-pro-protein which is exported to the periplasm. Probably autocatalyzes cleavage of its pro-peptide. The pro-peptide can be secreted with mature elastase.

It is found in the secreted. The enzyme catalyses Hydrolysis of proteins including elastin, collagen types III and IV, fibronectin and immunoglobulin A, generally with bulky hydrophobic group at P1'. Insulin B chain cleavage pattern identical to that of thermolysin, but specificity differs in other respects.. Cleaves host elastase, collagen, IgI and several complement components as well as endogenous pro-aminopeptidase, pro-chitin-binding protein (cbpD). Cleaves its own pro-peptide. Involved in the pathogenesis of P.aeruginosa infections. This is Elastase (lasB) from Pseudomonas aeruginosa (strain UCBPP-PA14).